Here is a 369-residue protein sequence, read N- to C-terminus: Cobalt-precorrin-5B C(1)-methyltransferase (369 aa).

This sequence belongs to the CbiD family.

It catalyses the reaction Co-precorrin-5B + S-adenosyl-L-methionine = Co-precorrin-6A + S-adenosyl-L-homocysteine. It functions in the pathway cofactor biosynthesis; adenosylcobalamin biosynthesis; cob(II)yrinate a,c-diamide from sirohydrochlorin (anaerobic route): step 6/10. In terms of biological role, catalyzes the methylation of C-1 in cobalt-precorrin-5B to form cobalt-precorrin-6A. The sequence is that of Cobalt-precorrin-5B C(1)-methyltransferase from Prosthecochloris aestuarii (strain DSM 271 / SK 413).